The primary structure comprises 234 residues: Accessory gland protein Acp29AB (234 aa).

An N-terminal signal peptide occupies residues 1-21 (MYATNLLYLLALWNLWLVSGG). Asparagine 29, asparagine 61, asparagine 127, and asparagine 164 each carry an N-linked (GlcNAc...) asparagine glycan. Residues 137 to 234 (VTCREMNGHL…SFVCQANQWA (98 aa)) enclose the C-type lectin domain. 2 disulfide bridges follow: cysteine 139–cysteine 228 and cysteine 207–cysteine 220.

The protein localises to the secreted. In terms of biological role, responsible for physiological and behavioral changes in mated female flies. In Drosophila simulans (Fruit fly), this protein is Accessory gland protein Acp29AB (Acp29AB).